Here is a 1148-residue protein sequence, read N- to C-terminus: Minor outer capsid protein P2 (1148 aa).

The PPPDE domain occupies 929–1148 (ENNAANFFER…LYIQSIYDAL (220 aa)). Residues histidine 953 and cysteine 1111 contribute to the active site.

Belongs to the phytoreovirus minor outer capsid protein P2 family. Interacts with host ent-kaurene oxidases OSKO1, OSKO2, OSKOL4 and OSKOL5; this interaction.

It is found in the virion. It localises to the host cytoplasm. Functionally, minor capsid protein present in the outer capsid, which is required for adsorption of the virus onto host insect cells (Potential). Could play a role in the host plant virus induced dwarfism. This chain is Minor outer capsid protein P2, found in Rice dwarf virus (isolate O) (RDV).